A 2264-amino-acid polypeptide reads, in one-letter code: RNA1 polyprotein (2264 aa).

The Cytoplasmic portion of the chain corresponds to 566–1156; the sequence is MCTALAAGIF…MGRTYLAENG (591 aa). The 167-residue stretch at 750-916 folds into the SF3 helicase domain; that stretch reads TEGPNELHKR…PGVLFDPDNP (167 aa). Residue 780–787 coordinates ATP; the sequence is GQRHCGKS. Residues 1157–1177 traverse the membrane as a helical segment; the sequence is CGILMIAAALILILVSAWGFW. The Lumenal segment spans residues 1178-1203; sequence KLFIGLFSGSMSLGAAIVGMSAVDIK. Residues 1227 to 1436 enclose the Peptidase C3 domain; sequence AYAKSQAGDG…WADIMPPNTL (210 aa). Residues H1270, E1308, and C1400 each act as for picornain 3C-like protease activity in the active site. Residues 1713 to 1841 form the RdRp catalytic domain; that stretch reads NEAINCDYSG…SVSPSIASWF (129 aa).

It belongs to the nepoviruses RNA1 polyprotein family. In terms of processing, specific enzymatic cleavages by picornain 3C-like protease in vivo yield mature proteins. Picornain 3C-like protease is autocatalytically processed. Post-translationally, VPg is uridylylated by the polymerase and is covalently linked to the 5'-end of genomic RNA. This uridylylated form acts as a nucleotide-peptide primer for the polymerase.

The protein localises to the host endoplasmic reticulum lumen. Its subcellular location is the host endoplasmic reticulum membrane. It carries out the reaction RNA(n) + a ribonucleoside 5'-triphosphate = RNA(n+1) + diphosphate. In terms of biological role, picornain 3C-like protease is a thiol protease that cleaves the P1 and P2 polyproteins. The chain is RNA1 polyprotein from Beet ringspot virus (BRSV).